The primary structure comprises 508 residues: UBX domain-containing protein 4 (508 aa).

The tract at residues 1-200 is interaction with UBQLN1; sequence MLWFQGAIPA…PAEDLNIRVE (200 aa). The Cytoplasmic portion of the chain corresponds to 1–413; the sequence is MLWFQGAIPA…VHSSSGDIWT (413 aa). Composition is skewed to polar residues over residues 117 to 151 and 160 to 187; these read SETSVANGSQSESSVSTPSASFEPNNTCENSQSRN and TSDTKSDTATGGESAGHATSSQEPSGCS. A disordered region spans residues 117–196; it reads SETSVANGSQ…SDQRPAEDLN (80 aa). Residues 315-393 form the UBX domain; sequence ERSTVARIQF…ELAPSASVVL (79 aa). Residues 414 to 434 lie within the membrane without spanning it; it reads LLGTVLYPFLAIWRLISNFLF. At 435–508 the chain is on the cytoplasmic side; it reads SNPPPTQTSV…TWNGNSTQQM (74 aa). The tract at residues 440 to 508 is disordered; that stretch reads TQTSVRVTSS…TWNGNSTQQM (69 aa). Over residues 441-458 the composition is skewed to polar residues; the sequence is QTSVRVTSSEPPNPASSS. Residues 459-491 show a composition bias toward basic and acidic residues; that stretch reads KSEKREPVRKRVLEKRGDDFKKEGKIYRLRTQD. The residue at position 489 (T489) is a Phosphothreonine. Over residues 498 to 508 the composition is skewed to polar residues; that stretch reads NTWNGNSTQQM.

In terms of assembly, directly interacts with VCP. Interacts with UBQLN1. Forms a complex with VCP and UBQLN1. In terms of tissue distribution, expressed in many tissues, including heart, brain, placenta, lung, liver, skeletal muscle, kidney and pancreas. Accumulates in Alzheimer disease-afflicted brains (at protein level).

It is found in the endoplasmic reticulum membrane. The protein resides in the nucleus envelope. Involved in endoplasmic reticulum-associated protein degradation (ERAD). Acts as a platform to recruit both UBQLN1 and VCP to the ER during ERAD. The protein is UBX domain-containing protein 4 (UBXN4) of Homo sapiens (Human).